Consider the following 136-residue polypeptide: Diuretic hormone 41 (136 aa).

The N-terminal stretch at 1-26 is a signal peptide; that stretch reads MMWWAVWCAAMVAGSVFTAAAPPTDS. The propeptide occupies 27-76; it reads IDLMQMDPSLADDESLGFAMQSLSGRYAAAPWLYLLADVSHDPQNGSDRV. Residue Ile-119 is modified to Isoleucine amide. Residues 123–136 constitute a propeptide that is removed on maturation; that stretch reads GFHWAPSAKAAKFY.

This sequence belongs to the sauvagine/corticotropin-releasing factor/urotensin I family.

The protein resides in the secreted. Regulation of fluid secretion. The protein is Diuretic hormone 41 (dh41) of Bombyx mori (Silk moth).